The sequence spans 557 residues: Formate--tetrahydrofolate ligase (557 aa).

Position 65-72 (threonine 65–threonine 72) interacts with ATP.

Belongs to the formate--tetrahydrofolate ligase family.

The enzyme catalyses (6S)-5,6,7,8-tetrahydrofolate + formate + ATP = (6R)-10-formyltetrahydrofolate + ADP + phosphate. It functions in the pathway one-carbon metabolism; tetrahydrofolate interconversion. The sequence is that of Formate--tetrahydrofolate ligase from Methylorubrum extorquens (strain CM4 / NCIMB 13688) (Methylobacterium extorquens).